A 341-amino-acid chain; its full sequence is Fructose-1,6-bisphosphatase, cytosolic (341 aa).

Mg(2+) contacts are provided by glutamate 71, glutamate 100, aspartate 121, leucine 123, and aspartate 124. Residues 124–127, asparagine 215, tyrosine 247, tyrosine 267, and lysine 277 each bind substrate; that span reads DGSS. Glutamate 283 is a binding site for Mg(2+).

This sequence belongs to the FBPase class 1 family. It depends on Mg(2+) as a cofactor.

Its subcellular location is the cytoplasm. The protein localises to the nucleus. It catalyses the reaction beta-D-fructose 1,6-bisphosphate + H2O = beta-D-fructose 6-phosphate + phosphate. In terms of biological role, catalyzes the first irreversible reaction from fructose-1,6-bisphosphate to fructose-6-phosphate and inorganic phosphate and plays an important regulatory role in sucrose biosynthesis and metabolism. Its activity is essential to regulate starch levels. Functions in fructose-mediated signaling independently of its catalytic activity in sugar metabolism. May act downstream of ABA2/GIN1, which is involved in abscisic acid (ABA) synthesis to regulate autotrophic transition and modulate early seedling establishment after seed germination. The chain is Fructose-1,6-bisphosphatase, cytosolic from Arabidopsis thaliana (Mouse-ear cress).